We begin with the raw amino-acid sequence, 375 residues long: DNA replication and repair protein RecF (375 aa).

Residue Gly-30–Thr-37 coordinates ATP.

This sequence belongs to the RecF family.

The protein localises to the cytoplasm. The RecF protein is involved in DNA metabolism; it is required for DNA replication and normal SOS inducibility. RecF binds preferentially to single-stranded, linear DNA. It also seems to bind ATP. This chain is DNA replication and repair protein RecF, found in Bacillus cereus (strain B4264).